Reading from the N-terminus, the 690-residue chain is Cysteine-rich receptor-like protein kinase 21 (690 aa).

The first 24 residues, 1 to 24 (MQKNKMVDLRAIFWFVVISSCAVA), serve as a signal peptide directing secretion. The 105-residue stretch at 25–129 (APTCIQRSDF…CLVRYSNHLI (105 aa)) folds into the Gnk2-homologous 1 domain. At 25-281 (APTCIQRSDF…KDGKNISTGS (257 aa)) the chain is on the extracellular side. N-linked (GlcNAc...) asparagine glycans are attached at residues asparagine 130, asparagine 148, asparagine 155, asparagine 220, asparagine 268, and asparagine 276. Residues 140–246 (AEYIEYKYNT…CFMRWDLQPF (107 aa)) form the Gnk2-homologous 2 domain. Residues 282-302 (IVAIAVVSVVVSTVLLALGYA) form a helical membrane-spanning segment. Residues 303–690 (VSRRRKAYQS…DASITSVRPR (388 aa)) are Cytoplasmic-facing. The Protein kinase domain occupies 363-640 (FHKSNKLGHG…IFRMLTNVSI (278 aa)). ATP-binding positions include 369 to 377 (LGHGGFGAV) and lysine 391. The residue at position 436 (tyrosine 436) is a Phosphotyrosine. The Proton acceptor role is filled by aspartate 488. Serine 492 bears the Phosphoserine mark. Threonine 528 carries the phosphothreonine modification. The residue at position 536 (tyrosine 536) is a Phosphotyrosine.

This sequence belongs to the protein kinase superfamily. Ser/Thr protein kinase family. CRK subfamily.

The protein localises to the membrane. It carries out the reaction L-seryl-[protein] + ATP = O-phospho-L-seryl-[protein] + ADP + H(+). The enzyme catalyses L-threonyl-[protein] + ATP = O-phospho-L-threonyl-[protein] + ADP + H(+). The polypeptide is Cysteine-rich receptor-like protein kinase 21 (CRK21) (Arabidopsis thaliana (Mouse-ear cress)).